The sequence spans 189 residues: uncharacterized protein (189 aa).

The region spanning 9–69 (ADTGGRILRA…SMLTSHIADV (61 aa)) is the HTH tetR-type domain. The H-T-H motif DNA-binding region spans 32–51 (TLAEIARRAGVSRPTVYRRW).

This is an uncharacterized protein from Mycobacterium tuberculosis (strain CDC 1551 / Oshkosh).